The chain runs to 169 residues: Cilia- and flagella-associated protein 276 (169 aa).

Disordered regions lie at residues 26–45 (SKKL…EPWS) and 150–169 (HTAA…FFST). Over residues 36-45 (HLAQQQEPWS) the composition is skewed to polar residues. The segment covering 160 to 169 (RKKDGGFFST) has biased composition (basic and acidic residues).

Microtubule inner protein component of sperm flagellar doublet microtubules. Expressed in cerebrum, cerebellum, gastrocnemius muscle, spinal cord and lung tissues.

It is found in the cytoplasm. The protein resides in the cytoskeleton. The protein localises to the flagellum axoneme. It localises to the cilium axoneme. In terms of biological role, microtubule inner protein (MIP) part of the dynein-decorated doublet microtubules (DMTs) in cilia axoneme, which is required for motile cilia beating. May play an important role for the maintenance of myelin-axon integrity. May affect intracellular Ca(2+) homeostasis. This Homo sapiens (Human) protein is Cilia- and flagella-associated protein 276.